A 544-amino-acid chain; its full sequence is Chaperonin GroEL (544 aa).

ATP contacts are provided by residues 30–33, lysine 51, 87–91, glycine 415, 481–483, and aspartate 497; these read TLGP, DGTTT, and DAL.

The protein belongs to the chaperonin (HSP60) family. In terms of assembly, forms a cylinder of 14 subunits composed of two heptameric rings stacked back-to-back. Interacts with the co-chaperonin GroES.

It is found in the cytoplasm. It carries out the reaction ATP + H2O + a folded polypeptide = ADP + phosphate + an unfolded polypeptide.. Functionally, together with its co-chaperonin GroES, plays an essential role in assisting protein folding. The GroEL-GroES system forms a nano-cage that allows encapsulation of the non-native substrate proteins and provides a physical environment optimized to promote and accelerate protein folding. This is Chaperonin GroEL from Chlamydia trachomatis serovar D (strain ATCC VR-885 / DSM 19411 / UW-3/Cx).